Consider the following 163-residue polypeptide: Small ribosomal subunit protein uS5 (163 aa).

Residues 11-74 (LTDRVVHINR…EQAKKNLIRV (64 aa)) form the S5 DRBM domain.

It belongs to the universal ribosomal protein uS5 family. As to quaternary structure, part of the 30S ribosomal subunit. Contacts proteins S4 and S8.

Functionally, with S4 and S12 plays an important role in translational accuracy. In terms of biological role, located at the back of the 30S subunit body where it stabilizes the conformation of the head with respect to the body. In Syntrophotalea carbinolica (strain DSM 2380 / NBRC 103641 / GraBd1) (Pelobacter carbinolicus), this protein is Small ribosomal subunit protein uS5.